The following is a 294-amino-acid chain: Acetylglutamate kinase (294 aa).

Substrate-binding positions include 67 to 68 (GG), arginine 89, and asparagine 193.

The protein belongs to the acetylglutamate kinase family. ArgB subfamily.

Its subcellular location is the cytoplasm. It catalyses the reaction N-acetyl-L-glutamate + ATP = N-acetyl-L-glutamyl 5-phosphate + ADP. It participates in amino-acid biosynthesis; L-arginine biosynthesis; N(2)-acetyl-L-ornithine from L-glutamate: step 2/4. Catalyzes the ATP-dependent phosphorylation of N-acetyl-L-glutamate. The protein is Acetylglutamate kinase of Leptospira interrogans serogroup Icterohaemorrhagiae serovar copenhageni (strain Fiocruz L1-130).